The chain runs to 292 residues: Acetylglutamate kinase (292 aa).

Residues 62-63 (GG), R84, and N188 contribute to the substrate site.

The protein belongs to the acetylglutamate kinase family. ArgB subfamily.

It is found in the cytoplasm. The catalysed reaction is N-acetyl-L-glutamate + ATP = N-acetyl-L-glutamyl 5-phosphate + ADP. It participates in amino-acid biosynthesis; L-arginine biosynthesis; N(2)-acetyl-L-ornithine from L-glutamate: step 2/4. Catalyzes the ATP-dependent phosphorylation of N-acetyl-L-glutamate. The chain is Acetylglutamate kinase from Methanosarcina mazei (strain ATCC BAA-159 / DSM 3647 / Goe1 / Go1 / JCM 11833 / OCM 88) (Methanosarcina frisia).